The following is a 445-amino-acid chain: Succinate--CoA ligase [ADP-forming] subunit beta, mitochondrial (445 aa).

The transit peptide at 1 to 17 (MLSNIVKKTIQSSKNLK) directs the protein to the mitochondrion. In terms of domain architecture, ATP-grasp spans 43–270 (QKMMKSYGIN…DNAAFRHPDI (228 aa)). Residues Lys80 and 87 to 89 (GRG) each bind ATP. 2 residues coordinate Mg(2+): Asn240 and Asp254. Substrate contacts are provided by residues Asn305 and 362–364 (GIM).

It belongs to the succinate/malate CoA ligase beta subunit family. ATP-specific subunit beta subfamily. In terms of assembly, heterodimer of an alpha and a beta subunit. The beta subunit determines specificity for ATP. Mg(2+) serves as cofactor.

It localises to the mitochondrion. It carries out the reaction succinate + ATP + CoA = succinyl-CoA + ADP + phosphate. The protein operates within carbohydrate metabolism; tricarboxylic acid cycle; succinate from succinyl-CoA (ligase route): step 1/1. ATP-specific succinyl-CoA synthetase functions in the citric acid cycle (TCA), coupling the hydrolysis of succinyl-CoA to the synthesis of ATP and thus represents the only step of substrate-level phosphorylation in the TCA. The beta subunit provides nucleotide specificity of the enzyme and binds the substrate succinate, while the binding sites for coenzyme A and phosphate are found in the alpha subunit. In Dictyostelium discoideum (Social amoeba), this protein is Succinate--CoA ligase [ADP-forming] subunit beta, mitochondrial (scsC).